The chain runs to 401 residues: Protein zntC (401 aa).

A run of 3 helical transmembrane segments spans residues 33–53 (GGLI…PWFL), 61–81 (LVSV…GAGF), and 114–134 (ITIV…SGGL). Residues 141–247 (NHMDLSQHNH…SHKDEKDSEK (107 aa)) form a disordered region. Over residues 167-184 (GDDDDDDVNEDQEEDSTK) the composition is skewed to acidic residues. Positions 200-209 (HNSSNSSSNG) are enriched in low complexity. Residues 212-225 (HGLKKKKKSKKEHG) are compositionally biased toward basic residues. Positions 226 to 247 (HGHNHDHSSNGHSHKDEKDSEK) are enriched in basic and acidic residues. Transmembrane regions (helical) follow at residues 256–276 (AWVF…GLGS), 285–305 (GLLI…GIAI), 316–336 (CIAL…GMAI), 351–371 (GIIL…ELLP), and 381–401 (KLKL…ALWV).

This sequence belongs to the ZIP transporter (TC 2.A.5) family.

The protein resides in the membrane. Its function is as follows. May transport divalent cations. May participate, with dstA, in the regulation of the differentiation of stalk cells during development. This is Protein zntC (zntC) from Dictyostelium discoideum (Social amoeba).